The following is an 835-amino-acid chain: MSPNTGESNAAVYASSTQLARALYGGDLVSWIKHTHPGISLELQLDVPVKLIKPGMSQTRPVTVVRAPMGSGKTTALLEWLQHALKADISVLVVSCRRSFTQTLIQRFNDAGLSGFVTYLTSETYIMGFKRLIVQLESLHRVSSEAIDSYDVLILDEVMSVIGQLYSPTMRRLSAVDSLLYRLLNRCSQIIAMDATVNSQFIDLISGLRGDENIHTIVCTYAGVGFSGRTCTILRDMGIDTLVRVIKRSPEHEDVRTIHQLRGTFFDELALRLQCGHNICIFSSTLSFSELVAQFCAIFTDSILILNSTRPLCNVNEWKHFRVLVYTTVVTVGLSFDMAHFHSMFAYIKPMSYGPDMVSVYQSLGRVRLLLLNEVLMYVDGSRTRCGPLFSPMLLNFTIANKFQWFPTHTQITNKLCCAFRQRCANAFTRSNTHLFSRFKYKHLFERCSLWSLADSINILQTLLASNQILVVLDGMGPITDVSPVQFCAFIHDLRHSANAVASCMRSLRQDNDSCLTDFGPSGFMADNITAFMEKYLMESINTEEQIKVFKALACPIEQPRLVNTAILGACIRIPEALEAFDVFQKIYTHYASGWFPVLDKTGEFSIATITTAPNLTTHWELFRRCAYIAKTLKWNPSTEGCVTQVLDTDINTLFNQHGDSLAQLIFEVMRCNVTDAKIILNRPVWRTTGFLDGCHNQCFRPIPTKHEYNIALFRLIWEQLFGARVTKSTQTFPGSTRVKNLKKKDLETLLDSINVDRSACRTYRQLYNLLMSQRHSFSQQRYKITAPAWARHVYFQAHQMHLAPHAEAMLQLALSELSPGSWPRINGAVNFESL.

The Helicase ATP-binding domain maps to Pro-54 to His-215. Ala-67–Thr-74 contributes to the ATP binding site.

The protein belongs to the herpesviridae OriBP family. As to quaternary structure, homodimer. Interacts with the major DNA-binding protein. Interacts with the helicase/primase component 52 and the polymerase accessory protein.

It localises to the host nucleus. Its function is as follows. Functions as a docking protein to recruit essential components of the viral replication machinery to viral DNA origins. In the presence of the major DNA-binding protein, opens dsDNA leading to a conformational change in the origin that facilitates DNA unwinding and subsequent replication. The sequence is that of Replication origin-binding protein from Homo sapiens (Human).